We begin with the raw amino-acid sequence, 1500 residues long: ABC transporter G family member 42 (1500 aa).

The segment at 26–56 is disordered; sequence VDEAFMPQNSGGGGGSRGRRRSGRGGTADDD. An ABC transporter 1 domain is found at 182–455; the sequence is LGLVGVRPGR…FESCGFRCPE (274 aa). Position 215-222 (215-222) interacts with ATP; the sequence is GPPSSGKT. The ABC transmembrane type-2 1 domain maps to 533-746; it reads ELLKASFAKE…GYNALAVNEF (214 aa). 7 helical membrane passes run 551–571, 584–604, 639–659, 670–690, 695–715, 724–744, and 783–803; these read FVYIFKTIQLIIVALVASTVF, GFVYIGALLFSLIVNMFNGFA, IPFSIIESIVWVIVTYYTIGF, LLLVFLIQQMAGGLFRATAGL, IIAQTGGALALLIFFVLGGFL, WWIWGYWVSPLMYGYNALAVN, and FWIGAAGLLGFTMFFNVLFTL. Residues 822–834 show a composition bias toward basic and acidic residues; that stretch reads TAKEAEGNGDARH. The interval 822–850 is disordered; that stretch reads TAKEAEGNGDARHTVRNGSTKSNGGNHKE. The segment covering 837 to 846 has biased composition (polar residues); sequence RNGSTKSNGG. An ABC transporter 2 domain is found at 894–1151; the sequence is MSFDDVNYYV…KMIEYFEAIP (258 aa). Residue 939–946 coordinates ATP; that stretch reads GVSGAGKT. Residues 1224-1438 enclose the ABC transmembrane type-2 2 domain; it reads GQFRACLWKQ…TVYGLIVTQY (215 aa). 7 helical membrane-spanning segments follow: residues 1245-1265, 1277-1297, 1331-1351, 1358-1378, 1388-1408, 1416-1436, and 1472-1492; these read LVRFSFTLFTALLLGTIFWKI, MVIGAMYTAVMFIGINNCATV, IPYVFVQTAYYTLIVYAMMSF, FFWFFFVSYFSFLYFTYYGMM, VAAIFAAAFYSLFNLFSGFFI, WWIWYYWLCPLAWTVYGLIVT, and VVAPVLVLFAVFFAFMYAICI.

It belongs to the ABC transporter superfamily. ABCG family. PDR (TC 3.A.1.205) subfamily.

Its subcellular location is the membrane. In terms of biological role, may be a general defense protein. This Oryza sativa subsp. japonica (Rice) protein is ABC transporter G family member 42.